Reading from the N-terminus, the 465-residue chain is MTSMASLFSFTSPAVKRLLGWKQGDEEEKWAEKAVDALVKKLKKKKGAMEELEKALSSPGQPSKCVTIPRSLDGRLQVSHRKGLPHVIYCRVWRWPDLQSHHELKPLDICEFPFGSKQKEVCINPYHYKRVESPVLPPVLVPRHNEFNPQHSLLVQFRNLSHNEPHMPQNATFPDSFHQPNSTPFPLSPNSPYPPSPASSTYPNSPASSGPGSPFQLPADTPPPAYMPPDDQMGQDNSQPMDTSNNMIPQIMPSISSRDVQPVAYEEPKHWCSIVYYELNNRVGEAFHASSTSVLVDGFTDPANNKSRFCLGLLSNVNRNSTIENTRRHIGKGVHLYYVGGEVYAECLSDSSIFVQSRNCNFHHGFHPTTVCKIPSSCSLKIFNNQEFAQLLAQSVNHGFEAVYELTKMCTIRMSFVKGWGAEYHRQDVTSTPCWIEIHLHGPLQWLDKVLTQMGSPLNPISSVS.

Thr-2 is modified (N-acetylthreonine). The 125-residue stretch at 13-137 (PAVKRLLGWK…YKRVESPVLP (125 aa)) folds into the MH1 domain. Zn(2+)-binding residues include Cys-65, Cys-110, Cys-122, and His-127. A disordered region spans residues 163-243 (NEPHMPQNAT…GQDNSQPMDT (81 aa)). A compositionally biased stretch (polar residues) spans 169-182 (QNATFPDSFHQPNS). Pro residues predominate over residues 186–197 (PLSPNSPYPPSP). The span at 198–214 (ASSTYPNSPASSGPGSP) shows a compositional bias: low complexity. Polar residues predominate over residues 234–243 (GQDNSQPMDT). Residues 271–465 (WCSIVYYELN…SPLNPISSVS (195 aa)) form the MH2 domain. 2 positions are modified to phosphoserine: Ser-463 and Ser-465.

It belongs to the dwarfin/SMAD family. In terms of assembly, homodimer. Forms trimers with the co-SMAD SMAD4. Interacts with PEBP2-alpha subunit and SMURF1. Interacts with SUV39H1 and SUV39H2. Interacts (via MH2 domain) with LEMD3. Interacts with WWP1. Interacts with TMEM119. Interacts with ZNF8. Interacts with RANBP3L. Interacts with HK1. Interacts with HGS; this interaction attenuates BMP signaling. Post-translationally, phosphorylated on serine by BMP (bone morphogenetic proteins) type 1 receptor kinase. Ubiquitin-mediated proteolysis by SMAD-specific E3 ubiquitin ligase SMURF1.

The protein resides in the cytoplasm. It localises to the nucleus. The protein localises to the mitochondrion. Transcriptional regulator that plays a role in various cellular processes including embryonic development, cell differentiation, angiogenesis and tissue homeostasis. Upon BMP ligand binding to their receptors at the cell surface, is phosphorylated by activated type I BMP receptors (BMPRIs) and associates with SMAD4 to form a heteromeric complex which translocates into the nucleus acting as transcription factor. In turn, the hetero-trimeric complex recognizes cis-regulatory elements containing Smad Binding Elements (SBEs) to modulate the outcome of the signaling network. Non-phosphorylated SMAD5 has a cytoplasmic role in energy metabolism regulation by promoting mitochondrial respiration and glycolysis in response to cytoplasmic pH changes. Mechanistically, interacts with hexokinase 1/HK1 and thereby accelerates glycolysis. The polypeptide is Mothers against decapentaplegic homolog 5 (Smad5) (Rattus norvegicus (Rat)).